Reading from the N-terminus, the 399-residue chain is Coiled-coil domain-containing protein 85C-B (399 aa).

Coiled-coil stretches lie at residues 52-84 (NRSLQVHLHEIRNLKEINQKLQDDNQELRELCC) and 113-144 (KEVSTYQQKLKELEINQENVLRENAELKDIIL). The tract at residues 151–199 (NGAGSRSSIDSQSSLSNLNGGSGTVRDVGDGSSTSSGGSAGSPDHHHNH) is disordered. Over residues 155 to 169 (SRSSIDSQSSLSNLN) the composition is skewed to low complexity.

This sequence belongs to the CCDC85 family.

The protein resides in the cell junction. It localises to the tight junction. Its subcellular location is the adherens junction. In terms of biological role, may play a role in cell-cell adhesion and epithelium development through its interaction with proteins of the beta-catenin family. May play an important role in cortical development, especially in the maintenance of radial glia. The protein is Coiled-coil domain-containing protein 85C-B (ccdc85cb) of Danio rerio (Zebrafish).